We begin with the raw amino-acid sequence, 205 residues long: Ribosomal RNA large subunit methyltransferase E (205 aa).

S-adenosyl-L-methionine contacts are provided by Gly-60, Trp-62, Asp-80, Asp-96, and Asp-121. Lys-161 (proton acceptor) is an active-site residue.

This sequence belongs to the class I-like SAM-binding methyltransferase superfamily. RNA methyltransferase RlmE family.

It is found in the cytoplasm. The catalysed reaction is uridine(2552) in 23S rRNA + S-adenosyl-L-methionine = 2'-O-methyluridine(2552) in 23S rRNA + S-adenosyl-L-homocysteine + H(+). In terms of biological role, specifically methylates the uridine in position 2552 of 23S rRNA at the 2'-O position of the ribose in the fully assembled 50S ribosomal subunit. This chain is Ribosomal RNA large subunit methyltransferase E, found in Chromobacterium violaceum (strain ATCC 12472 / DSM 30191 / JCM 1249 / CCUG 213 / NBRC 12614 / NCIMB 9131 / NCTC 9757 / MK).